A 206-amino-acid chain; its full sequence is MARYLGPKLKLSRREGTDLFLKSGVRAIDTKCKIEQAPGQHGARKPRLSDYGVQLREKQKVRRMYGVLERQFRNYYKEAARLKGNTGENLLALLEGRLDNVVYRMGFGATRAEARQLVSHKAIMVNGRVVNIASYQVKANDVVSIREKAKKQSRVKAALELAEQREKPTWLEVDAGKMEGTFKRQPERSDLSADINEHLIVELYSK.

Residues 96 to 156 (GRLDNVVYRM…EKAKKQSRVK (61 aa)) enclose the S4 RNA-binding domain.

The protein belongs to the universal ribosomal protein uS4 family. In terms of assembly, part of the 30S ribosomal subunit. Contacts protein S5. The interaction surface between S4 and S5 is involved in control of translational fidelity.

In terms of biological role, one of the primary rRNA binding proteins, it binds directly to 16S rRNA where it nucleates assembly of the body of the 30S subunit. Functionally, with S5 and S12 plays an important role in translational accuracy. The chain is Small ribosomal subunit protein uS4 from Klebsiella pneumoniae (strain 342).